A 613-amino-acid polypeptide reads, in one-letter code: pH-response transcription factor pacC/RIM101 (613 aa).

Residues 1–61 (MSPSAPEQKP…SSTAPSTSSD (61 aa)) are disordered. A compositionally biased stretch (low complexity) spans 11-60 (QLQQQQQQQQQGSSSGDSSSGSVNDSKSVTPAPSATSSTSQSSTAPSTSS). C2H2-type zinc fingers lie at residues 64–89 (LICRWNACNQKFPAPEALYEHICERH), 100–124 (LTCQWNSCRTTTVKRDHITSHIRVH), and 130–152 (HKCEFCGKSFKRPQDLKKHVKTH). Positions 146–157 (KKHVKTHADDSV) are enriched in basic and acidic residues. Disordered regions lie at residues 146–186 (KKHV…YDHT), 371–391 (NTPSPPTSHRSPTGMHVGADG), 406–535 (AISS…ATRE), and 565–613 (EFVE…MPGA). Residues 417–441 (PPSSSMSYTSGHSPSPSSSAMSPQS) show a composition bias toward low complexity. Polar residues-rich tracts occupy residues 442–460 (RHGSTASVMYPTLPTSLPA) and 506–517 (SGASTPKASESA). Residues 451–454 (YPTL) carry the YPX[LI] motif 1 motif. A YPX[LI] motif 2 motif is present at residues 605 to 608 (YPIL).

Belongs to the pacC/RIM101 family. Binds to DNA. Post-translationally, activated by C-terminal proteolytic cleavage by signaling protease (probably palB/RIM13) at neutral to alkaline ambient pH.

The protein localises to the cytoplasm. The protein resides in the nucleus. Functionally, transcription factor that mediates regulation of both acid- and alkaline-expressed genes in response to ambient pH. At alkaline ambient pH, activates transcription of alkaline-expressed genes (including PAC1 itself) and represses transcription of acid-expressed genes. This Gibberella moniliformis (Maize ear and stalk rot fungus) protein is pH-response transcription factor pacC/RIM101 (PAC1).